The following is a 247-amino-acid chain: MSSKLLIDLGSELRYEYNKNGIPSKLHMGSEVIGETTKTTRPDAAKDCWDQYLREKLNEDYVNMRVGVILLGASPARSRCCSIYRNLITSHVEASSPKFKGIKFFLLDDLCDAYTIRGLINCFTNPPFMYISTNSWRGLPLLFNSYVPASAIVNLVSPGKLITIYLITCNNFGDGFIPIAPTTTKLADLFGKTGDLEDFTFQSLRSPLCDVHFCGTRSQLLPFPKDESEYTRALELLYTAMIHSLTY.

This is an uncharacterized protein from Cryphonectria parasitica (Chestnut blight fungus).